We begin with the raw amino-acid sequence, 64 residues long: Large ribosomal subunit protein uL30 (64 aa).

Belongs to the universal ribosomal protein uL30 family. Part of the 50S ribosomal subunit.

This is Large ribosomal subunit protein uL30 from Bdellovibrio bacteriovorus (strain ATCC 15356 / DSM 50701 / NCIMB 9529 / HD100).